A 528-amino-acid chain; its full sequence is Phosphoenolpyruvate carboxykinase (ATP) (528 aa).

Arginine 54, tyrosine 190, and lysine 196 together coordinate substrate. Residues lysine 196, histidine 215, and 231–239 (GLSGTGKTT) each bind ATP. Positions 196 and 215 each coordinate Mn(2+). Aspartate 252 serves as a coordination point for Mn(2+). ATP is bound by residues glutamate 280, arginine 316, and threonine 441. Arginine 316 serves as a coordination point for substrate.

Belongs to the phosphoenolpyruvate carboxykinase (ATP) family. Mn(2+) serves as cofactor.

Its subcellular location is the cytoplasm. The catalysed reaction is oxaloacetate + ATP = phosphoenolpyruvate + ADP + CO2. It participates in carbohydrate biosynthesis; gluconeogenesis. In terms of biological role, involved in the gluconeogenesis. Catalyzes the conversion of oxaloacetate (OAA) to phosphoenolpyruvate (PEP) through direct phosphoryl transfer between the nucleoside triphosphate and OAA. This is Phosphoenolpyruvate carboxykinase (ATP) from Sulfurimonas denitrificans (strain ATCC 33889 / DSM 1251) (Thiomicrospira denitrificans (strain ATCC 33889 / DSM 1251)).